Here is a 146-residue protein sequence, read N- to C-terminus: MLILDRILGQASDPALADRLHDLSHAGQVETLSLSGSDIQRHRLRLASDRGTDCAIRLERHQQLRNGSVLMLDSQRAIVVQMQDQHYLDLLPRDSAAALELGYFAGNMHWAVRFAGDTLQIPLNGPEADYLERLAPMLADGRVRRA.

Belongs to the UreE family.

Its subcellular location is the cytoplasm. Functionally, involved in urease metallocenter assembly. Binds nickel. Probably functions as a nickel donor during metallocenter assembly. In Pseudomonas syringae pv. tomato (strain ATCC BAA-871 / DC3000), this protein is Urease accessory protein UreE 1.